Consider the following 419-residue polypeptide: Septin-2 (419 aa).

The Septin-type G domain occupies 40–306 (NGFVFNVMCI…ELYRQKRLEQ (267 aa)). The interval 50 to 57 (GETGLGKS) is G1 motif. Residues 50 to 57 (GETGLGKS), Ser-79, Gly-105, 186 to 194 (KADTISKVE), Gly-240, and Arg-255 each bind GTP. A G3 motif region spans residues 102 to 105 (DTVG). The tract at residues 185 to 188 (AKAD) is G4 motif. An important for dimerization region spans residues 259–269 (WGTVQVENETH).

It belongs to the TRAFAC class TrmE-Era-EngA-EngB-Septin-like GTPase superfamily. Septin GTPase family. In terms of assembly, may assemble into a multicomponent structure.

Its subcellular location is the cytoplasm. The protein localises to the cytoskeleton. The protein resides in the spindle. Functionally, involved in cytokinesis. The polypeptide is Septin-2 (Drosophila melanogaster (Fruit fly)).